Consider the following 139-residue polypeptide: Large ribosomal subunit protein uL16 (139 aa).

The tract at residues 74-94 is disordered; that stretch reads LTKKPAETRQGSGKGSPESWV.

It belongs to the universal ribosomal protein uL16 family. As to quaternary structure, part of the 50S ribosomal subunit.

Its function is as follows. Binds 23S rRNA and is also seen to make contacts with the A and possibly P site tRNAs. The polypeptide is Large ribosomal subunit protein uL16 (Saccharopolyspora erythraea (strain ATCC 11635 / DSM 40517 / JCM 4748 / NBRC 13426 / NCIMB 8594 / NRRL 2338)).